The chain runs to 116 residues: MSRGGSAGGGQSSLGYLFGGNEAPKPAAKPAPAAAPAPAPAPAPAAAVAAPAEKPSPAKADATKQIPAGIQGSRSNNNYHRADGQNTGNFLTDRPSTKVHAAPGGGSSLGYLFGGN.

A compositionally biased stretch (gly residues) spans 1–12 (MSRGGSAGGGQS). The interval 1–116 (MSRGGSAGGG…SSLGYLFGGN (116 aa)) is disordered. A compositionally biased stretch (pro residues) spans 27 to 43 (AAKPAPAAAPAPAPAPA). The segment covering 44–60 (PAAAVAAPAEKPSPAKA) has biased composition (low complexity). Residues 72-90 (GSRSNNNYHRADGQNTGNF) show a composition bias toward polar residues. Gly residues predominate over residues 103–116 (PGGGSSLGYLFGGN).

Belongs to the SPIRAL1 family.

Its function is as follows. Acts in maintaining the cortical microtubules organization essential for anisotropic cell growth. The sequence is that of Protein SPIRAL1-like 1 from Oryza sativa subsp. japonica (Rice).